Reading from the N-terminus, the 108-residue chain is uncharacterized protein (108 aa).

A compositionally biased stretch (polar residues) spans Met-1–Lys-10. 2 disordered regions span residues Met-1 to Arg-63 and Val-83 to Gln-108. Residues Tyr-33–Pro-62 show a composition bias toward basic and acidic residues.

This is an uncharacterized protein from Gallid herpesvirus 2 (strain Chicken/Md5/ATCC VR-987) (GaHV-2).